Here is a 394-residue protein sequence, read N- to C-terminus: Phosphoglycerate kinase (394 aa).

Residues 21–23, R37, 60–63, R119, and R152 each bind substrate; these read DFN and HLGR. Residues K202, E324, and 350–353 contribute to the ATP site; that span reads GGDS.

Belongs to the phosphoglycerate kinase family. As to quaternary structure, monomer.

The protein resides in the cytoplasm. It carries out the reaction (2R)-3-phosphoglycerate + ATP = (2R)-3-phospho-glyceroyl phosphate + ADP. Its pathway is carbohydrate degradation; glycolysis; pyruvate from D-glyceraldehyde 3-phosphate: step 2/5. This Carboxydothermus hydrogenoformans (strain ATCC BAA-161 / DSM 6008 / Z-2901) protein is Phosphoglycerate kinase.